We begin with the raw amino-acid sequence, 176 residues long: Ribosome rescue factor SmrB (176 aa).

The Smr domain maps to 97-172 (LDMHGMTQQE…GDGALLVLLS (76 aa)).

It belongs to the SmrB family. In terms of assembly, associates with collided ribosomes, but not with correctly translating polysomes.

Functionally, acts as a ribosome collision sensor. Detects stalled/collided disomes (pairs of ribosomes where the leading ribosome is stalled and a second ribosome has collided with it) and endonucleolytically cleaves mRNA at the 5' boundary of the stalled ribosome. Stalled/collided disomes form a new interface (primarily via the 30S subunits) that binds SmrB. Cleaved mRNA becomes available for tmRNA ligation, leading to ribosomal subunit dissociation and rescue of stalled ribosomes. The chain is Ribosome rescue factor SmrB from Vibrio campbellii (strain ATCC BAA-1116).